Consider the following 571-residue polypeptide: Peptide-N4-(N-acetyl-beta-glucosaminyl)asparagine amidase A (571 aa).

Asn121, Asn143, Asn197, Asn241, Asn318, Asn367, Asn390, Asn423, Asn457, Asn481, Asn524, and Asn529 each carry an N-linked (GlcNAc...) asparagine glycan.

In terms of assembly, heterodimer of a large and a small chain. In terms of processing, is highly glycosylated and is largly resistant against self-deglycosylation.

The enzyme catalyses Hydrolysis of an N(4)-(acetyl-beta-D-glucosaminyl)asparagine residue in which the glucosamine residue may be further glycosylated, to yield a (substituted) N-acetyl-beta-D-glucosaminylamine and a peptide containing an aspartate residue.. This Prunus dulcis (Almond) protein is Peptide-N4-(N-acetyl-beta-glucosaminyl)asparagine amidase A.